Reading from the N-terminus, the 835-residue chain is Phenylalanine--tRNA ligase beta subunit (835 aa).

The tRNA-binding domain maps to 44–160 (PATTGPLVLG…ESGQPGDDAR (117 aa)). Positions 419–494 (PTMPSITMPV…RLEGLEAIPT (76 aa)) constitute a B5 domain. Aspartate 472, aspartate 478, glutamate 481, and glutamate 482 together coordinate Mg(2+). Residues 741 to 834 (SAFPALHQDI…AKERLGAEMR (94 aa)) form the FDX-ACB domain.

Belongs to the phenylalanyl-tRNA synthetase beta subunit family. Type 1 subfamily. As to quaternary structure, tetramer of two alpha and two beta subunits. The cofactor is Mg(2+).

The protein resides in the cytoplasm. It carries out the reaction tRNA(Phe) + L-phenylalanine + ATP = L-phenylalanyl-tRNA(Phe) + AMP + diphosphate + H(+). The polypeptide is Phenylalanine--tRNA ligase beta subunit (Corynebacterium efficiens (strain DSM 44549 / YS-314 / AJ 12310 / JCM 11189 / NBRC 100395)).